The primary structure comprises 237 residues: Uridylate kinase (237 aa).

Residue 9 to 12 (KLSG) participates in ATP binding. Position 51 (Gly-51) interacts with UMP. Residues Gly-52 and Arg-56 each coordinate ATP. Residues Asp-71 and 132-139 (CGNPFFTT) contribute to the UMP site. 3 residues coordinate ATP: Thr-159, Tyr-165, and Asp-168.

The protein belongs to the UMP kinase family. As to quaternary structure, homohexamer.

It localises to the cytoplasm. It catalyses the reaction UMP + ATP = UDP + ADP. It functions in the pathway pyrimidine metabolism; CTP biosynthesis via de novo pathway; UDP from UMP (UMPK route): step 1/1. Inhibited by UTP. In terms of biological role, catalyzes the reversible phosphorylation of UMP to UDP. The protein is Uridylate kinase of Prochlorococcus marinus (strain SARG / CCMP1375 / SS120).